The sequence spans 219 residues: uncharacterized protein (219 aa).

The next 2 membrane-spanning stretches (helical) occupy residues 81-101 (VVKW…NYLI) and 168-188 (PIME…TALV).

The protein localises to the membrane. This is an uncharacterized protein from Saccharomyces cerevisiae (strain ATCC 204508 / S288c) (Baker's yeast).